The sequence spans 189 residues: Transcriptional repressor NrdR (189 aa).

A zinc finger spans residues 3–34 (CPFCRGDDSRVVDSREVEDGQAIRRRRSCSGC). One can recognise an ATP-cone domain in the interval 46–136 (LSVVKRSGVT…VYRAFSSVED (91 aa)). The tract at residues 152–189 (RLPEGPEAAQGGPESKAGNGQAAGSGDPEGVKAEKSSE) is disordered. The span at 180-189 (EGVKAEKSSE) shows a compositional bias: basic and acidic residues.

The protein belongs to the NrdR family. Zn(2+) is required as a cofactor.

Functionally, negatively regulates transcription of bacterial ribonucleotide reductase nrd genes and operons by binding to NrdR-boxes. This is Transcriptional repressor NrdR from Saccharopolyspora erythraea (strain ATCC 11635 / DSM 40517 / JCM 4748 / NBRC 13426 / NCIMB 8594 / NRRL 2338).